The sequence spans 810 residues: Volume-regulated anion channel subunit LRRC8A (810 aa).

Met-1 bears the N-acetylmethionine mark. Over Met-1–Trp-23 the chain is Cytoplasmic. Residues Trp-24–Val-47 form a helical membrane-spanning segment. Residues Thr-48 to Lys-123 lie on the Extracellular side of the membrane. Cystine bridges form between Cys-54-Cys-310, Cys-57-Cys-65, and Cys-113-Cys-295. Asn-66 and Asn-83 each carry an N-linked (GlcNAc...) asparagine glycan. A helical transmembrane segment spans residues Tyr-124–Phe-142. At Trp-143–Tyr-264 the chain is on the cytoplasmic side. Thr-200 carries the post-translational modification Phosphothreonine. At Ser-202 the chain carries Phosphoserine. Thr-215 is subject to Phosphothreonine. At Ser-217 the chain carries Phosphoserine. A helical membrane pass occupies residues Met-265–Val-286. At His-287 to Thr-316 the chain is on the extracellular side. Residues Leu-317–Trp-341 traverse the membrane as a helical segment. The Cytoplasmic portion of the chain corresponds to Trp-342 to Ala-810. LRR repeat units follow at residues Glu-399 to Lys-422, Asn-423 to Leu-445, Glu-447 to Leu-468, Thr-469 to Arg-492, Glu-493 to Leu-515, Leu-518 to Glu-542, Leu-543 to Val-565, Val-567 to Lys-589, Met-590 to Leu-613, Asn-615 to His-637, His-639 to Leu-661, Thr-662 to Cys-684, Lys-686 to Leu-707, Gln-708 to Cys-730, Lys-732 to Leu-753, Thr-754 to Cys-776, and Leu-778 to Arg-801. Residues Leu-706–Leu-707 carry the Di-leucine motif motif.

This sequence belongs to the LRRC8 family. Heterohexamer; oligomerizes with other LRRC8 proteins (LRRC8B, LRRC8C, LRRC8D and/or LRRC8E) to form a heterohexamer. Can form homohexamers in vitro, but these have lower conductance than heterohexamers. In vivo, the subunit composition may depend primarily on expression levels, and heterooligomeric channels containing various proportions of the different LRRC8 proteins may coexist. Interact with GRB2. Interacts with NOX4; this interaction prevents the ubiquitin-mediated degradation of LRRC8A. N-glycosylated. Expressed in brain, kidney, ovary, lung, liver, heart, and fetal brain and liver. Found at high levels in bone marrow; lower levels are detected in peripheral blood cells. Expressed on T-cells as well as on B-lineage cells.

Its subcellular location is the cell membrane. The protein resides in the lysosome membrane. The enzyme catalyses chloride(in) = chloride(out). It catalyses the reaction iodide(out) = iodide(in). It carries out the reaction taurine(out) = taurine(in). The catalysed reaction is L-aspartate(out) = L-aspartate(in). The enzyme catalyses L-glutamate(out) = L-glutamate(in). It catalyses the reaction myo-inositol(out) = myo-inositol(in). It carries out the reaction 2',3'-cGAMP(out) = 2',3'-cGAMP(in). Its activity is regulated as follows. Inhibited by (4-[(2-butyl-6,7-dichloro-2-cyclopentyl-2,3-dihydro-1-oxo-1H-inden-5-yl)oxy]butanoic acid), which plugs the channel like a cork in a bottle by binding in the extracellular selectivity filter and sterically occluding ion conduction. Lipids may block conduction in closed heterohexameric channels. Essential component of the volume-regulated anion channel (VRAC, also named VSOAC channel), an anion channel required to maintain a constant cell volume in response to extracellular or intracellular osmotic changes. The VRAC channel conducts iodide better than chloride and can also conduct organic osmolytes like taurine. Mediates efflux of amino acids, such as aspartate and glutamate, in response to osmotic stress. LRRC8A and LRRC8D are required for the uptake of the drug cisplatin. In complex with LRRC8C or LRRC8E, acts as a transporter of immunoreactive cyclic dinucleotide GMP-AMP (2'-3'-cGAMP), an immune messenger produced in response to DNA virus in the cytosol: mediates both import and export of 2'-3'-cGAMP, thereby promoting transfer of 2'-3'-cGAMP to bystander cells. In contrast, complexes containing LRRC8D inhibit transport of 2'-3'-cGAMP. Required for in vivo channel activity, together with at least one other family member (LRRC8B, LRRC8C, LRRC8D or LRRC8E); channel characteristics depend on the precise subunit composition. Can form functional channels by itself (in vitro). Involved in B-cell development: required for the pro-B cell to pre-B cell transition. Also required for T-cell development. Required for myoblast differentiation: VRAC activity promotes membrane hyperpolarization and regulates insulin-stimulated glucose metabolism and oxygen consumption. Also acts as a regulator of glucose-sensing in pancreatic beta cells: VRAC currents, generated in response to hypotonicity- or glucose-induced beta cell swelling, depolarize cells, thereby causing electrical excitation, leading to increase glucose sensitivity and insulin secretion. Also plays a role in lysosome homeostasis by forming functional lysosomal VRAC channels in response to low cytoplasmic ionic strength condition: lysosomal VRAC channels are necessary for the formation of large lysosome-derived vacuoles, which store and then expel excess water to maintain cytosolic water homeostasis. Acts as a key factor in NLRP3 inflammasome activation by modulating itaconate efflux and mitochondria function. The polypeptide is Volume-regulated anion channel subunit LRRC8A (Homo sapiens (Human)).